A 120-amino-acid chain; its full sequence is MSRFLEDLRSLSSAEEFFSFLGVEFNPKVVQVNRLHILKKYQTYLKACDAEENGESVSRETHKRCLERAYADFLTSDARSEKLFKVFQSEAGKAFVGLDAILPLAAAERSESKVNSSAEA.

It belongs to the NifW family. In terms of assembly, homotrimer; associates with NifD.

May protect the nitrogenase Fe-Mo protein from oxidative damage. This is Nitrogenase-stabilizing/protective protein NifW from Rhodospirillum rubrum (strain ATCC 11170 / ATH 1.1.1 / DSM 467 / LMG 4362 / NCIMB 8255 / S1).